Here is a 409-residue protein sequence, read N- to C-terminus: Immunity-related GTPase family M protein 1 (409 aa).

The 177-residue stretch at 75–251 folds into the IRG-type G domain; the sequence is IPVSIFVTGD…PKLRDTLHKD (177 aa). Residues 84–91, 109–113, and 191–193 contribute to the GTP site; these read DSGNGMSS, TGVVR, and KLD. Position 202 is a phosphoserine (Ser202). 232–234 is a GTP binding site; sequence SSL. A Glycyl lysine isopeptide (Lys-Gly) (interchain with G-Cter in ubiquitin) cross-link involves residue Lys270. The alpha-K amphipathic helix stretch occupies residues 350–374; that stretch reads KLRLMTCAIVNAFFRLLRFLPCVCC.

It belongs to the TRAFAC class dynamin-like GTPase superfamily. IRG family. As to quaternary structure, interacts with ULK1; promoting the coassembly of ULK1 and BECN1. Interacts with BECN1; enhancing BECN1-interacting partners and influencing the composition of the BECN1 complex. Interacts with ATG16L1. Interacts with NOD2; promoting Irgm1 'Lys-63'-linked polyubiquitination, which is required for interactions with the core autophagy factors. Interacts with STX17; promoting STX17 recruitment to autophagosomes. Interacts with ATG8 proteins (GABARAP, GABARAPL1, GABARAPL2, MAP1LC3A, MAP1LC3B and MAP1LC3C); promoting STX17 recruitment to autophagosomes. Interacts with TFEB; promoting association between TFEB and PPP3CB and TFEB dephosphorylation. Interacts with PPP3CB; promoting association between TFEB and PPP3CB and TFEB dephosphorylation. Interacts with NLRP3; preventing NLRP3 inflammasome assembly and promoting SQSTM1/p62-dependent autophagic degradation of NLRP3. Interacts with CGAS; promoting SQSTM1/p62-dependent autophagic degradation of CGAS. Interacts with RIGI/RIG-I; promoting SQSTM1/p62-dependent autophagic degradation of RIGI/RIG-I. Interacts with NOD1; promoting SQSTM1/p62-dependent autophagic degradation of RIGI/RIG-I. Interacts with NOD2; promoting SQSTM1/p62-dependent autophagic degradation of RIGI/RIG-I. Interacts with RIPK2; promoting SQSTM1/p62-dependent autophagic degradation of RIGI/RIG-I. Interacts with PIK3CA. Post-translationally, palmitoylated on C-terminal Cys residues. Palmitoylation, together with the alpha-K amphipathic helix, which binds phosphatidylinositol, mediate binding to membranes. In terms of processing, ubiquitinated via 'Lys-63'-linked polyubiquitination in a NOD2-dependent process. 'Lys-63'-linked polyubiquitination is required for interactions with the core autophagy factors. Ubiquitination at Lys-270 by the DCX(WDR77) complex, also named CLR4(WDR77) complex, in intestinal cells, leading to its degradation by the proteasome. As to expression, expressed in lung and primary macrophages.

The protein resides in the golgi apparatus membrane. It is found in the cell membrane. Its subcellular location is the cytoplasmic vesicle. The protein localises to the phagosome membrane. It localises to the autophagosome membrane. The protein resides in the lysosome membrane. It is found in the late endosome membrane. Its subcellular location is the mitochondrion membrane. The protein localises to the lipid droplet. It localises to the cell projection. The protein resides in the phagocytic cup. The enzyme catalyses GTP + H2O = GDP + phosphate + H(+). Functionally, immunity-related GTPase that plays important roles in innate immunity and inflammatory response. Acts as a dynamin-like protein that binds to intracellular membranes and promotes remodeling and trafficking of those membranes. Required for clearance of acute protozoan and bacterial infections by interacting with autophagy and lysosome regulatory proteins, thereby promoting the fusion of phagosomes with lysosomes for efficient degradation of cargo including microbes. Regulates selective autophagy, including xenophagy and mitophagy, both directly and indirectly. Directly regulates autophagy by acting as a molecular adapter that promotes the coassembly of the core autophagy machinery to mediate antimicrobial defense: Irgm1 (1) activates AMPK, which in turn phosphorylates ULK1 and BECN1 to induce autophagy, (2) promotes the coassembly of ULK1 and BECN1, enhancing BECN1-interacting partners and (3) influences the composition of the BECN1 complex, by competing with the negative regulators BCL2 and RUBCN, to trigger autophagy. Also activates autophagy by promoting recruitment of STX17 to autophagosomes. In collaboration with ATG8 proteins, regulate lysosomal biogenesis, a fundamental process for any autophagic pathway, by promoting TFEB dephosphorylation. Also modulates autophagy by assisting with autophagosome formation and preventing lysosomal deacidification. Regulates autophagy by affecting mitochondrial fusion and fission. Also involved in M1 macrophage activation for the production of proinflammatory cytokines. While activating autophagy, acts as a key negative regulator of the inflammatory and interferon responses both by (1) promoting mitophagy and (2) mediating autophagy-dependent degradation of effectors of the inflammatory response. Promotes degradation of damaged and IFNG/IFN-gamma-stressed mitochondria via mitophagy, preventing cytosolic release of ligands that activate inflammation. Negatively regulates interferon-signaling in hematopoietic stem cells, preserving hematopoietic stem cell number and function. Promotes expansion of activated CD4(+) T-cells by inhibiting IFNG/IFN-gamma signaling, thereby preventing Ifng-mediated cell death of CD4(+) T-cells. Acts as a suppressor of inflammation by promoting recruitment of inflammation effectors, such as CGAS, RIGI/RIG-I and NLRP3, to autophagosome membranes, leading to their SQSTM1/p62-dependent autophagic degradation. Also directly inhibits assembly of the NLRP3 inflammasome by preventing the association between NLRP3 and PYCARD. Acts as a negative regulator of antiviral innate immune response by suppressing the RIPK2-dependent pro-inflammatory response: mediates recruitment of RIPosomes, composed of RIPK2 and NOD1 or NOD2, to autophagosome membranes, promoting their SQSTM1/p62-dependent autophagic degradation. This chain is Immunity-related GTPase family M protein 1, found in Mus musculus (Mouse).